The sequence spans 396 residues: Elongation factor Tu (396 aa).

A tr-type G domain is found at 10–206 (KPHVNVGTIG…ALDTYIPTPE (197 aa)). The interval 19-26 (GHVDHGKT) is G1. 19 to 26 (GHVDHGKT) serves as a coordination point for GTP. Threonine 26 contributes to the Mg(2+) binding site. The interval 60-64 (GITIN) is G2. Residues 81–84 (DCPG) are G3. GTP-binding positions include 81–85 (DCPGH) and 136–139 (NKCD). Positions 136 to 139 (NKCD) are G4. The segment at 174 to 176 (SAK) is G5.

This sequence belongs to the TRAFAC class translation factor GTPase superfamily. Classic translation factor GTPase family. EF-Tu/EF-1A subfamily. Monomer.

The protein resides in the cytoplasm. It catalyses the reaction GTP + H2O = GDP + phosphate + H(+). Functionally, GTP hydrolase that promotes the GTP-dependent binding of aminoacyl-tRNA to the A-site of ribosomes during protein biosynthesis. The protein is Elongation factor Tu of Cupriavidus necator (strain ATCC 17699 / DSM 428 / KCTC 22496 / NCIMB 10442 / H16 / Stanier 337) (Ralstonia eutropha).